The following is a 293-amino-acid chain: Bifunctional protein FolD (293 aa).

Residues 164–166, serine 193, and threonine 234 contribute to the NADP(+) site; that span reads GRS.

Belongs to the tetrahydrofolate dehydrogenase/cyclohydrolase family. Homodimer.

It catalyses the reaction (6R)-5,10-methylene-5,6,7,8-tetrahydrofolate + NADP(+) = (6R)-5,10-methenyltetrahydrofolate + NADPH. The catalysed reaction is (6R)-5,10-methenyltetrahydrofolate + H2O = (6R)-10-formyltetrahydrofolate + H(+). Its pathway is one-carbon metabolism; tetrahydrofolate interconversion. Its function is as follows. Catalyzes the oxidation of 5,10-methylenetetrahydrofolate to 5,10-methenyltetrahydrofolate and then the hydrolysis of 5,10-methenyltetrahydrofolate to 10-formyltetrahydrofolate. The sequence is that of Bifunctional protein FolD from Phocaeicola vulgatus (strain ATCC 8482 / DSM 1447 / JCM 5826 / CCUG 4940 / NBRC 14291 / NCTC 11154) (Bacteroides vulgatus).